Reading from the N-terminus, the 257-residue chain is Cytosolic Fe-S cluster assembly factor NUBP2 homolog (257 aa).

ATP is bound at residue 14 to 21; sequence GKGGVGKS. [4Fe-4S] cluster is bound by residues Cys-188 and Cys-191.

The protein belongs to the Mrp/NBP35 ATP-binding proteins family. NUBP2/CFD1 subfamily. In terms of assembly, heterotetramer of 2 NUBP1 and 2 NUBP2 chains. Requires [4Fe-4S] cluster as cofactor.

Its subcellular location is the cytoplasm. Component of the cytosolic iron-sulfur (Fe/S) protein assembly (CIA) machinery. Required for maturation of extramitochondrial Fe-S proteins. The NUBP1-NUBP2 heterotetramer forms a Fe-S scaffold complex, mediating the de novo assembly of an Fe-S cluster and its transfer to target apoproteins. This Culex quinquefasciatus (Southern house mosquito) protein is Cytosolic Fe-S cluster assembly factor NUBP2 homolog.